Here is a 504-residue protein sequence, read N- to C-terminus: MASRLTPLTLLLLLLAGDRAFSDPEATSHSTQDPLEAQAKSRESFPERDDSWSPPEPTVLPSTWPTTSVAITITNDTMGKVANESFSQHSQPAAQLPTDSPGQPPLNSSSQPSTASDLPTQATTEPFCPEPLAQCSDSDRDSSEAKLSEALTDFSVKLYHAFSATKMAKTNMAFSPFSIASLLTQVLLGAGDSTKSNLESILSYPKDFACVHQALKGFSSKGVTSVSQIFHSPDLAIRDTYVNASQSLYGSSPRVLGPDSAANLELINTWVAENTNHKIRKLLDSLPSDTCLVLLNAVYLSAKWKITFEPKKMMAPFFYKNSMIKVPMMSSVKYPVAQFDDHTLKAKVGQLQLSHNLSFVIVVPVFPKHQLKDVEKALNPTVFKAIMKKLELSKFLPTYLTMPHIKVKSSQDMLSVMEKLEFFDFTYDLNLCGLTEDPDLQVSAMKHETVLELTESGVEAAAASAISFGRSLPIFEVQRPFLFLLWDQQHRFPVFMGRVYDPRG.

The signal sequence occupies residues M1 to S22. Residues S22–T67 form a disordered region. Over residues A39–S51 the composition is skewed to basic and acidic residues. N-linked (GlcNAc...) asparagine glycosylation is found at N75, N83, and N107. Positions S85–T124 are enriched in polar residues. A disordered region spans residues S85–D141. Intrachain disulfides connect C128–C432 and C135–C210. N-linked (GlcNAc...) asparagine glycans are attached at residues N243 and N356.

Belongs to the serpin family. In terms of assembly, interacts with MASP1.

The protein localises to the secreted. In terms of biological role, serine protease inhibitor, which acrs as a regulator of the classical complement pathway. Forms a proteolytically inactive stoichiometric complex with the C1r or C1s proteases. May also regulate blood coagulation, fibrinolysis and the generation of kinins. Very efficient inhibitor of FXIIa. Inhibits chymotrypsin and kallikrein. The sequence is that of Plasma protease C1 inhibitor (Serping1) from Mus musculus (Mouse).